We begin with the raw amino-acid sequence, 572 residues long: Squalene monooxygenase (572 aa).

The Cytoplasmic segment spans residues 1 to 19; the sequence is MWTFLGIATFTYFYKKCGD. The interval 1–98 is interaction with MARCHF6; sequence MWTFLGIATF…EQLESKKCRK (98 aa). The stretch at 20 to 40 is an intramembrane region; that stretch reads VTLANKELLLCVLVFLSLGLV. Residues 41–572 lie on the Cytoplasmic side of the membrane; that stretch reads LSYRCRHRHG…IYSEMKYLVH (532 aa). Residues 61–72 are required for degradation in response to high membrane cholesterol levels; that stretch reads QFAAFSDILSAL. The interval 116–572 is sufficient for enzyme activity; the sequence is TSFVTDPEVI…IYSEMKYLVH (457 aa). Residues 131–132, 151–152, arginine 159, arginine 232, valine 248, aspartate 406, and methionine 419 contribute to the FAD site; these read VL and ER. The interval 514–572 is hydrophobic; mediates interaction with membranes; the sequence is PLVLIRHFFSVAIYATYFCFKSEPWATKPRALFSSGAVLYKACSILFPLIYSEMKYLVH.

This sequence belongs to the squalene monooxygenase family. As to quaternary structure, interacts (via N-terminal domain) with MARCHF6. Interacts with SMIM22; this interaction modulates lipid droplet formation. FAD is required as a cofactor. Ubiquitinated by MARCHF6 in response to high cholesterol levels in intracellular membranes, leading to proteasomal degradation. In terms of tissue distribution, detected in liver.

The protein localises to the microsome membrane. Its subcellular location is the endoplasmic reticulum membrane. The enzyme catalyses squalene + reduced [NADPH--hemoprotein reductase] + O2 = (S)-2,3-epoxysqualene + oxidized [NADPH--hemoprotein reductase] + H2O + H(+). It participates in terpene metabolism; lanosterol biosynthesis; lanosterol from farnesyl diphosphate: step 2/3. Catalyzes the stereospecific oxidation of squalene to (S)-2,3-epoxysqualene, and is considered to be a rate-limiting enzyme in steroid biosynthesis. In Mus musculus (Mouse), this protein is Squalene monooxygenase (Sqle).